The sequence spans 339 residues: Replication factor C subunit 2 (339 aa).

ATP is bound at residue tyrosine 48–lysine 55.

Belongs to the activator 1 small subunits family. Heterotetramer of subunits RFC2, RFC3, RFC4 and RFC5 that can form a complex with RFC1. Expressed in roots, leaves, shoot apical meristem (SAM), flag leaves and panicles.

It localises to the nucleus. May be involved in DNA replication and thus regulate cell proliferation. This Oryza sativa subsp. japonica (Rice) protein is Replication factor C subunit 2 (RFC2).